Reading from the N-terminus, the 241-residue chain is Exosome complex component RRP41 homolog (241 aa).

Position 1 is an N-acetylmethionine (Met1).

Belongs to the RNase PH family. In terms of assembly, component of the RNA exosome complex. Interacts with RPP4.

The protein resides in the cytoplasm. The protein localises to the nucleus. It localises to the nucleolus. Functionally, non-catalytic component of the RNA exosome complex which has 3'-&gt;5' exoribonuclease activity and participates in a multitude of cellular RNA processing, maturation and degradation events. In vitro, is a processive phosphorolytic exonuclease and requires a single-stranded poly(A) tail on the substrate RNA for its activity. Can complement the growth defect of a yeast mutant lacking RRP41 exonuclease. Required for normal development of female gametophytes. The protein is Exosome complex component RRP41 homolog of Arabidopsis thaliana (Mouse-ear cress).